Reading from the N-terminus, the 230-residue chain is 5'-methylthioadenosine/S-adenosylhomocysteine nucleosidase (230 aa).

Catalysis depends on Glu12, which acts as the Proton acceptor. Residues Gly78, Ile153, and 174–175 each bind substrate; that span reads ME. Asp198 serves as the catalytic Proton donor.

It belongs to the PNP/UDP phosphorylase family. MtnN subfamily.

The enzyme catalyses S-adenosyl-L-homocysteine + H2O = S-(5-deoxy-D-ribos-5-yl)-L-homocysteine + adenine. It catalyses the reaction S-methyl-5'-thioadenosine + H2O = 5-(methylsulfanyl)-D-ribose + adenine. The catalysed reaction is 5'-deoxyadenosine + H2O = 5-deoxy-D-ribose + adenine. It participates in amino-acid biosynthesis; L-methionine biosynthesis via salvage pathway; S-methyl-5-thio-alpha-D-ribose 1-phosphate from S-methyl-5'-thioadenosine (hydrolase route): step 1/2. In terms of biological role, catalyzes the irreversible cleavage of the glycosidic bond in both 5'-methylthioadenosine (MTA) and S-adenosylhomocysteine (SAH/AdoHcy) to adenine and the corresponding thioribose, 5'-methylthioribose and S-ribosylhomocysteine, respectively. Also cleaves 5'-deoxyadenosine, a toxic by-product of radical S-adenosylmethionine (SAM) enzymes, into 5-deoxyribose and adenine. In Shewanella frigidimarina (strain NCIMB 400), this protein is 5'-methylthioadenosine/S-adenosylhomocysteine nucleosidase.